We begin with the raw amino-acid sequence, 247 residues long: 23S rRNA (guanosine-2'-O-)-methyltransferase RlmB (247 aa).

The S-adenosyl-L-methionine site is built by G197, I217, and L226.

Belongs to the class IV-like SAM-binding methyltransferase superfamily. RNA methyltransferase TrmH family. RlmB subfamily.

It localises to the cytoplasm. It catalyses the reaction guanosine(2251) in 23S rRNA + S-adenosyl-L-methionine = 2'-O-methylguanosine(2251) in 23S rRNA + S-adenosyl-L-homocysteine + H(+). Specifically methylates the ribose of guanosine 2251 in 23S rRNA. The sequence is that of 23S rRNA (guanosine-2'-O-)-methyltransferase RlmB from Vibrio vulnificus (strain CMCP6).